The sequence spans 227 residues: Ribose-5-phosphate isomerase A (227 aa).

Residues 28–31 (TGST), 81–84 (DGAD), and 94–97 (KGGG) each bind substrate. Catalysis depends on Glu-103, which acts as the Proton acceptor. Residue Lys-121 coordinates substrate.

This sequence belongs to the ribose 5-phosphate isomerase family. Homodimer.

It catalyses the reaction aldehydo-D-ribose 5-phosphate = D-ribulose 5-phosphate. It participates in carbohydrate degradation; pentose phosphate pathway; D-ribose 5-phosphate from D-ribulose 5-phosphate (non-oxidative stage): step 1/1. In terms of biological role, catalyzes the reversible conversion of ribose-5-phosphate to ribulose 5-phosphate. This is Ribose-5-phosphate isomerase A from Caulobacter vibrioides (strain ATCC 19089 / CIP 103742 / CB 15) (Caulobacter crescentus).